A 396-amino-acid chain; its full sequence is MLRLRLRSIVIGAAIAGSILLLFNHGSIEGMEDLTEISMLEDYTPEAANKDYVGQQEEEELLYDQPSYIEEEEDPDLEAYLSDLEREELEHSLEELDEENNYKLHLRYSFSQLQDFDEENEAVHMIVPKDTYEFEVPYHADIPKLIWQTSKDPFDREVMKYTRFWRINHPSYSHAVLDDEQSKALVISSFGDSSVSKISQAYAMMPLPVLKADFFRYLVLLAKGGIYSDIDTAPLKHINNWIPREYRKRNIRLIVGIEADPDRPDWNDYYARRVQFCQWTIAAAPGHPILWELVRRITDETWKLHDSKKLSKNGESVMEWTGPGIWTDAIMDYLNWQYGPFSVENITNLEEPYLVGDVLILPITAFSPGVGHMGSKSPNDPMAYVQHFFAGSWKDD.

Residues 1–7 (MLRLRLR) are Cytoplasmic-facing. Residues 8 to 28 (SIVIGAAIAGSILLLFNHGSI) form a helical; Signal-anchor for type II membrane protein membrane-spanning segment. Residues 29 to 396 (EGMEDLTEIS…HFFAGSWKDD (368 aa)) lie on the Lumenal side of the membrane. The DXD motif motif lies at 229–231 (DID). N345 carries N-linked (GlcNAc...) asparagine glycosylation.

Belongs to the glycosyltransferase 32 family. Mn(2+) is required as a cofactor.

The protein resides in the endoplasmic reticulum membrane. The protein localises to the golgi apparatus membrane. The catalysed reaction is Transfers an alpha-D-mannosyl residue from GDP-mannose into lipid-linked oligosaccharide, forming an alpha-(1-&gt;6)-D-mannosyl-D-mannose linkage.. Functionally, mannosyltransferase involved in outer chain elongation of asparagine-linked oligosaccharides of the type Man(9)GlcNAc(2). May otherwise add the first alpha-1,6-mannose to the Man(8)GlcNAc(2) core oligosaccharide from the ER. Represents the first enzymatic event required for synthesis of outer chain mannose linkages on yeast secretory proteins. This chain is Initiation-specific alpha-1,6-mannosyltransferase, found in Schizosaccharomyces pombe (strain 972 / ATCC 24843) (Fission yeast).